A 410-amino-acid chain; its full sequence is Cysteine desulfurase IscS (410 aa).

Pyridoxal 5'-phosphate is bound by residues 80–81, Asn-160, Gln-188, and 208–210; these read AT and SGH. Lys-211 is subject to N6-(pyridoxal phosphate)lysine. A pyridoxal 5'-phosphate-binding site is contributed by Thr-248. Residue Cys-334 is the Cysteine persulfide intermediate of the active site. Cys-334 is a binding site for [2Fe-2S] cluster.

Belongs to the class-V pyridoxal-phosphate-dependent aminotransferase family. NifS/IscS subfamily. As to quaternary structure, homodimer. Forms a heterotetramer with IscU, interacts with other sulfur acceptors. Requires pyridoxal 5'-phosphate as cofactor.

It is found in the cytoplasm. It carries out the reaction (sulfur carrier)-H + L-cysteine = (sulfur carrier)-SH + L-alanine. The protein operates within cofactor biosynthesis; iron-sulfur cluster biosynthesis. Its function is as follows. Master enzyme that delivers sulfur to a number of partners involved in Fe-S cluster assembly, tRNA modification or cofactor biosynthesis. Catalyzes the removal of elemental sulfur atoms from cysteine to produce alanine. Functions as a sulfur delivery protein for Fe-S cluster synthesis onto IscU, an Fe-S scaffold assembly protein, as well as other S acceptor proteins. This chain is Cysteine desulfurase IscS, found in Rickettsia akari (strain Hartford).